Here is an 874-residue protein sequence, read N- to C-terminus: Valine--tRNA ligase (874 aa).

A 'HIGH' region motif is present at residues 42 to 52; sequence PNITGRIHIGH. A 'KMSKS' region motif is present at residues 522–526; that stretch reads KMSKS. Lysine 525 is an ATP binding site. The stretch at 806–874 forms a coiled coil; sequence DYIDIDTEKQ…KLQALLKEIS (69 aa).

It belongs to the class-I aminoacyl-tRNA synthetase family. ValS type 1 subfamily. In terms of assembly, monomer.

The protein resides in the cytoplasm. It catalyses the reaction tRNA(Val) + L-valine + ATP = L-valyl-tRNA(Val) + AMP + diphosphate. Catalyzes the attachment of valine to tRNA(Val). As ValRS can inadvertently accommodate and process structurally similar amino acids such as threonine, to avoid such errors, it has a 'posttransfer' editing activity that hydrolyzes mischarged Thr-tRNA(Val) in a tRNA-dependent manner. This chain is Valine--tRNA ligase, found in Petrotoga mobilis (strain DSM 10674 / SJ95).